The following is a 272-amino-acid chain: NAD kinase (272 aa).

The active-site Proton acceptor is Asp62. Residues 62–63, Arg67, 129–130, Arg140, Lys157, Asp159, 170–175, Ala194, and Gln229 each bind NAD(+); these read DG, NE, and SSYSSS.

Belongs to the NAD kinase family. Requires a divalent metal cation as cofactor.

The protein localises to the cytoplasm. The catalysed reaction is NAD(+) + ATP = ADP + NADP(+) + H(+). Involved in the regulation of the intracellular balance of NAD and NADP, and is a key enzyme in the biosynthesis of NADP. Catalyzes specifically the phosphorylation on 2'-hydroxyl of the adenosine moiety of NAD to yield NADP. This is NAD kinase from Thermoplasma volcanium (strain ATCC 51530 / DSM 4299 / JCM 9571 / NBRC 15438 / GSS1).